The primary structure comprises 29 residues: Omega-conotoxins GVIIA/GVIIB (29 aa).

3 cysteine pairs are disulfide-bonded: C1–C16, C8–C19, and C15–C26. A 4-hydroxyproline mark is found at P4 and P7.

As to expression, expressed by the venom duct.

Its subcellular location is the secreted. Omega-conotoxins act at presynaptic membranes, they bind and block voltage-gated calcium channels (Cav). This chain is Omega-conotoxins GVIIA/GVIIB, found in Conus geographus (Geography cone).